The sequence spans 123 residues: Fluoride-specific ion channel FluC (123 aa).

4 helical membrane-spanning segments follow: residues Val-6–Val-26, Leu-38–Gly-58, Phe-68–Phe-88, and Leu-100–Leu-120. Na(+) contacts are provided by Gly-75 and Ser-78.

Belongs to the fluoride channel Fluc/FEX (TC 1.A.43) family.

The protein resides in the cell membrane. It catalyses the reaction fluoride(in) = fluoride(out). With respect to regulation, na(+) is not transported, but it plays an essential structural role and its presence is essential for fluoride channel function. Fluoride-specific ion channel. Important for reducing fluoride concentration in the cell, thus reducing its toxicity. This is Fluoride-specific ion channel FluC from Pyrococcus furiosus (strain ATCC 43587 / DSM 3638 / JCM 8422 / Vc1).